Consider the following 412-residue polypeptide: Flap endonuclease 1-B (412 aa).

Residues methionine 1–arginine 105 are N-domain. Aspartate 34 is a binding site for Mg(2+). Position 71 (arginine 71) interacts with DNA. Residues aspartate 87, glutamate 159, glutamate 161, aspartate 180, and aspartate 182 each contribute to the Mg(2+) site. The segment at leucine 123–histidine 254 is I-domain. Glutamate 159 serves as a coordination point for DNA. DNA is bound by residues glycine 232 and aspartate 234. A Mg(2+)-binding site is contributed by aspartate 234.

The protein belongs to the XPG/RAD2 endonuclease family. FEN1 subfamily. Interacts with PCNA. Three molecules of FEN1 bind to one PCNA trimer with each molecule binding to one PCNA monomer. PCNA stimulates the nuclease activity without altering cleavage specificity. It depends on Mg(2+) as a cofactor. Post-translationally, phosphorylated. Phosphorylation upon DNA damage induces relocalization to the nuclear plasma.

It localises to the nucleus. The protein resides in the nucleolus. The protein localises to the nucleoplasm. It is found in the mitochondrion. In terms of biological role, structure-specific nuclease with 5'-flap endonuclease and 5'-3' exonuclease activities involved in DNA replication and repair. During DNA replication, cleaves the 5'-overhanging flap structure that is generated by displacement synthesis when DNA polymerase encounters the 5'-end of a downstream Okazaki fragment. It enters the flap from the 5'-end and then tracks to cleave the flap base, leaving a nick for ligation. Also involved in the long patch base excision repair (LP-BER) pathway, by cleaving within the apurinic/apyrimidinic (AP) site-terminated flap. Acts as a genome stabilization factor that prevents flaps from equilibrating into structures that lead to duplications and deletions. Also possesses 5'-3' exonuclease activity on nicked or gapped double-stranded DNA, and exhibits RNase H activity. Also involved in replication and repair of rDNA and in repairing mitochondrial DNA. This Oryza sativa subsp. indica (Rice) protein is Flap endonuclease 1-B.